Reading from the N-terminus, the 367-residue chain is Chorismate synthase (367 aa).

Arg48 is an NADP(+) binding site. FMN-binding positions include 125–127 (RSS), 243–244 (NA), Gly283, 298–302 (KPTSS), and Arg324.

This sequence belongs to the chorismate synthase family. In terms of assembly, homotetramer. It depends on FMNH2 as a cofactor.

The catalysed reaction is 5-O-(1-carboxyvinyl)-3-phosphoshikimate = chorismate + phosphate. The protein operates within metabolic intermediate biosynthesis; chorismate biosynthesis; chorismate from D-erythrose 4-phosphate and phosphoenolpyruvate: step 7/7. In terms of biological role, catalyzes the anti-1,4-elimination of the C-3 phosphate and the C-6 proR hydrogen from 5-enolpyruvylshikimate-3-phosphate (EPSP) to yield chorismate, which is the branch point compound that serves as the starting substrate for the three terminal pathways of aromatic amino acid biosynthesis. This reaction introduces a second double bond into the aromatic ring system. The protein is Chorismate synthase of Psychrobacter sp. (strain PRwf-1).